The primary structure comprises 281 residues: Probable endonuclease 4 (281 aa).

The Zn(2+) site is built by H69, H109, E145, D179, H182, H216, D229, H231, and E261.

Belongs to the AP endonuclease 2 family. Zn(2+) serves as cofactor.

The catalysed reaction is Endonucleolytic cleavage to 5'-phosphooligonucleotide end-products.. Functionally, endonuclease IV plays a role in DNA repair. It cleaves phosphodiester bonds at apurinic or apyrimidinic (AP) sites, generating a 3'-hydroxyl group and a 5'-terminal sugar phosphate. The polypeptide is Probable endonuclease 4 (Buchnera aphidicola subsp. Acyrthosiphon pisum (strain APS) (Acyrthosiphon pisum symbiotic bacterium)).